The primary structure comprises 331 residues: XylDLEGF operon transcriptional activator 1 (331 aa).

An HTH araC/xylS-type domain is found at 214-315 (ERVVQFIEEN…GELPSDTLRR (102 aa)). DNA-binding regions (H-T-H motif) lie at residues 231–252 (ERLAELALMSPRSLYTLFEKHA) and 282–305 (VTEMALDYGFFHTGRFAENYRSTF).

It localises to the cytoplasm. Regulatory protein of the TOL plasmid xyl operons. XylS activates the xylXYZLTEGFJQKIH operon required for the degradation of toluene, m-xylene and p-xylene. This is XylDLEGF operon transcriptional activator 1 (xylS1) from Pseudomonas putida (Arthrobacter siderocapsulatus).